The sequence spans 204 residues: MGAYKYMQEIWRKKQSDALRYLLRIRTWHYRQLSAVHRVPRPTRPEKARRLGYRAKQGFVVYRVRVRRGNRKRPVCKGQTYGKPKTHGVNELKNAKSKQAVAEGRAGRRLGSLRVLNSYWVAEDSTYKFYEVVLIDPFHKAIRRNPDTQWITKPVHKHREQRGLTSAGRKSRGLGKGWRFSATRGGSQAKNWKRKNTKVFHRKR.

The segment at 155-204 is disordered; the sequence is VHKHREQRGLTSAGRKSRGLGKGWRFSATRGGSQAKNWKRKNTKVFHRKR. The span at 191–204 shows a compositional bias: basic residues; sequence NWKRKNTKVFHRKR.

Belongs to the eukaryotic ribosomal protein eL15 family.

The sequence is that of Large ribosomal subunit protein eL15 (rpl-15) from Caenorhabditis elegans.